The chain runs to 307 residues: Protease HtpX homolog (307 aa).

A helical membrane pass occupies residues 16-36; that stretch reads LFMGVGYLIGGAAGAMIALVV. His-130 is a binding site for Zn(2+). Residue Glu-131 is part of the active site. His-134 contributes to the Zn(2+) binding site. 2 helical membrane passes run 145–165 and 172–192; these read ITATIAGAISMLAQFGMFFGG and GPGIIGSLAMMILAPLGAMLV. Residue Glu-201 coordinates Zn(2+). Positions 278–307 are disordered; it reads AGQSGSATPDPAPAPRGPWNGGAPRRGPWG.

The protein belongs to the peptidase M48B family. Requires Zn(2+) as cofactor.

It localises to the cell inner membrane. The sequence is that of Protease HtpX homolog from Nitrobacter hamburgensis (strain DSM 10229 / NCIMB 13809 / X14).